The sequence spans 102 residues: Small ribosomal subunit protein uS10 (102 aa).

The protein belongs to the universal ribosomal protein uS10 family. Part of the 30S ribosomal subunit.

Its function is as follows. Involved in the binding of tRNA to the ribosomes. The sequence is that of Small ribosomal subunit protein uS10 from Staphylococcus aureus (strain JH9).